Reading from the N-terminus, the 984-residue chain is Mediator of RNA polymerase II transcription subunit 5 (984 aa).

It belongs to the Mediator complex subunit 5 family. As to quaternary structure, component of the Mediator complex.

The protein localises to the nucleus. In terms of biological role, component of the Mediator complex, a coactivator involved in the regulated transcription of nearly all RNA polymerase II-dependent genes. Mediator functions as a bridge to convey information from gene-specific regulatory proteins to the basal RNA polymerase II transcription machinery. Mediator is recruited to promoters by direct interactions with regulatory proteins and serves as a scaffold for the assembly of a functional preinitiation complex with RNA polymerase II and the general transcription factors. This Phaeosphaeria nodorum (strain SN15 / ATCC MYA-4574 / FGSC 10173) (Glume blotch fungus) protein is Mediator of RNA polymerase II transcription subunit 5 (NUT1).